The sequence spans 57 residues: Large ribosomal subunit protein eL20 (57 aa).

This sequence belongs to the eukaryotic ribosomal protein eL20 family. Part of the 50S ribosomal subunit. Binds 23S rRNA.

This is Large ribosomal subunit protein eL20 from Archaeoglobus fulgidus (strain ATCC 49558 / DSM 4304 / JCM 9628 / NBRC 100126 / VC-16).